A 364-amino-acid chain; its full sequence is Phosphoserine aminotransferase (364 aa).

Arg-46 is a binding site for L-glutamate. Pyridoxal 5'-phosphate-binding positions include 80–81 (AR), Trp-106, Thr-157, Asp-176, and Gln-199. At Lys-200 the chain carries N6-(pyridoxal phosphate)lysine. 241 to 242 (NT) provides a ligand contact to pyridoxal 5'-phosphate.

The protein belongs to the class-V pyridoxal-phosphate-dependent aminotransferase family. SerC subfamily. In terms of assembly, homodimer. Pyridoxal 5'-phosphate is required as a cofactor.

It localises to the cytoplasm. The enzyme catalyses O-phospho-L-serine + 2-oxoglutarate = 3-phosphooxypyruvate + L-glutamate. It catalyses the reaction 4-(phosphooxy)-L-threonine + 2-oxoglutarate = (R)-3-hydroxy-2-oxo-4-phosphooxybutanoate + L-glutamate. Its pathway is amino-acid biosynthesis; L-serine biosynthesis; L-serine from 3-phospho-D-glycerate: step 2/3. It functions in the pathway cofactor biosynthesis; pyridoxine 5'-phosphate biosynthesis; pyridoxine 5'-phosphate from D-erythrose 4-phosphate: step 3/5. Catalyzes the reversible conversion of 3-phosphohydroxypyruvate to phosphoserine and of 3-hydroxy-2-oxo-4-phosphonooxybutanoate to phosphohydroxythreonine. This is Phosphoserine aminotransferase from Vibrio cholerae serotype O1 (strain ATCC 39315 / El Tor Inaba N16961).